A 153-amino-acid chain; its full sequence is MSVTDIVLIVFIALLLAYAIYDEFIMNMMKGKTRLQIQLKRKSKIDCAIFVGLIAILVYNNVMANGEPLTTYLLVGLALIAFYLSYIRWPKLLFKNTGFFYANAFIEYRRIKSMNLSEDGILVIDLEQRRLLIQVRQLDDLEKIYNFFVENQS.

3 consecutive transmembrane segments (helical) span residues 6 to 26 (IVLI…EFIM), 45 to 65 (IDCA…VMAN), and 67 to 87 (EPLT…LSYI).

This sequence belongs to the UPF0266 family.

The protein resides in the cell inner membrane. In Yersinia enterocolitica serotype O:8 / biotype 1B (strain NCTC 13174 / 8081), this protein is UPF0266 membrane protein YE1773.